The chain runs to 402 residues: Multidrug resistance protein MdtH (402 aa).

A run of 11 helical transmembrane segments spans residues 13–33 (YFLL…FPLI), 34–54 (SIRF…ALGL), 99–116 (PWVL…GTLF), 139–159 (LLMM…SWLL), 165–185 (LVCG…AWLL), 214–234 (VLTL…LPVM), 243–263 (AAVK…LYPL), 277–297 (LMAG…ASNL), 300–320 (LFTL…ARET), 340–360 (LGLA…FDAG), and 368–388 (LPWA…WWQF).

It belongs to the major facilitator superfamily. DHA1 family. MdtH (TC 2.A.1.2.21) subfamily.

It localises to the cell inner membrane. The chain is Multidrug resistance protein MdtH from Cronobacter sakazakii (strain ATCC BAA-894) (Enterobacter sakazakii).